A 306-amino-acid polypeptide reads, in one-letter code: Agmatinase (306 aa).

Residues His126, Asp149, His151, Asp153, Asp230, and Asp232 each coordinate Mn(2+).

The protein belongs to the arginase family. Agmatinase subfamily. Requires Mn(2+) as cofactor.

It catalyses the reaction agmatine + H2O = urea + putrescine. It participates in amine and polyamine biosynthesis; putrescine biosynthesis via agmatine pathway; putrescine from agmatine: step 1/1. In terms of biological role, catalyzes the formation of putrescine from agmatine. This is Agmatinase from Enterobacter sp. (strain 638).